The sequence spans 204 residues: Protease (204 aa).

Active-site residues include histidine 54, aspartate 71, and cysteine 121.

Belongs to the peptidase C5 family. As to quaternary structure, interacts with protease cofactor pVI-C; this interaction is necessary for protease activation.

It localises to the virion. Its subcellular location is the host nucleus. It catalyses the reaction Cleaves proteins of the adenovirus and its host cell at two consensus sites: -Yaa-Xaa-Gly-Gly-|-Xaa- and -Yaa-Xaa-Gly-Xaa-|-Gly- (in which Yaa is Met, Ile or Leu, and Xaa is any amino acid).. Requires DNA and protease cofactor for maximal activation. Inside nascent virions, becomes partially activated by binding to the viral DNA, allowing it to cleave the cofactor that binds to the protease and fully activates it. Actin, like the viral protease cofactor, seems to act as a cofactor in the cleavage of cytokeratin 18 and of actin itself. Functionally, cleaves viral precursor proteins (pTP, pIIIa, pVI, pVII, pVIII, and pX) inside newly assembled particles giving rise to mature virions. Protease complexed to its cofactor slides along the viral DNA to specifically locate and cleave the viral precursors. Mature virions have a weakened organization compared to the unmature virions, thereby facilitating subsequent uncoating. Without maturation, the particle lacks infectivity and is unable to uncoat. Late in adenovirus infection, in the cytoplasm, may participate in the cytoskeleton destruction. Cleaves host cell cytoskeletal keratins K7 and K18. The protein is Protease of Frog adenovirus 1 (strain ATCC VR-896) (FrAdV-1).